The chain runs to 93 residues: UPF0369 protein RC0209 (93 aa).

Positions 1–24 (MDDKKDNRHLSKPAYREECTGDTE) are disordered. The 48-residue stretch at 8-55 (RHLSKPAYREECTGDTERSTTAYMDILEDVSTGSTSKLPLEAKFVKIS) folds into the RPE1 insert domain.

This sequence belongs to the SDHAF4 family.

The chain is UPF0369 protein RC0209 from Rickettsia conorii (strain ATCC VR-613 / Malish 7).